The following is a 208-amino-acid chain: dITP/XTP pyrophosphatase (208 aa).

Substrate is bound at residue Ser-17 to Lys-22. Positions 49 and 78 each coordinate Mg(2+). Residue Asp-78 is the Proton acceptor of the active site. Substrate is bound by residues Ser-79, Phe-164–Asp-167, Lys-187, and His-192–Arg-193.

This sequence belongs to the HAM1 NTPase family. In terms of assembly, homodimer. The cofactor is Mg(2+).

The catalysed reaction is XTP + H2O = XMP + diphosphate + H(+). It catalyses the reaction dITP + H2O = dIMP + diphosphate + H(+). It carries out the reaction ITP + H2O = IMP + diphosphate + H(+). In terms of biological role, pyrophosphatase that catalyzes the hydrolysis of nucleoside triphosphates to their monophosphate derivatives, with a high preference for the non-canonical purine nucleotides XTP (xanthosine triphosphate), dITP (deoxyinosine triphosphate) and ITP. Seems to function as a house-cleaning enzyme that removes non-canonical purine nucleotides from the nucleotide pool, thus preventing their incorporation into DNA/RNA and avoiding chromosomal lesions. The polypeptide is dITP/XTP pyrophosphatase (Burkholderia pseudomallei (strain K96243)).